We begin with the raw amino-acid sequence, 79 residues long: UPF0154 protein SAG1601 (79 aa).

A helical transmembrane segment spans residues 5 to 25; the sequence is IWILLIIVALFGGLVGGIFIA.

Belongs to the UPF0154 family.

Its subcellular location is the membrane. This is UPF0154 protein SAG1601 from Streptococcus agalactiae serotype V (strain ATCC BAA-611 / 2603 V/R).